A 138-amino-acid chain; its full sequence is MRTLWIVAVWLIGVEGSVIEFGTMIIEETGRSPFPFYTSYGCYCGLGGKGKPKDDTDRCCFVHDCCYGSMPDCSPKTDIYRYHRENGEIICESGTSCEKRICECDKAAAVCFRENLKTYKNKYMVYPDSLCKEESEKC.

A signal peptide spans 1–16 (MRTLWIVAVWLIGVEG). Intrachain disulfides connect cysteine 42-cysteine 131, cysteine 44-cysteine 60, cysteine 59-cysteine 111, cysteine 65-cysteine 138, cysteine 66-cysteine 104, cysteine 73-cysteine 97, and cysteine 91-cysteine 102. Residues tyrosine 43, glycine 45, and glycine 47 each coordinate Ca(2+). The active site involves histidine 63. Aspartate 64 is a binding site for Ca(2+). Aspartate 105 is a catalytic residue.

Belongs to the phospholipase A2 family. Group II subfamily. D49 sub-subfamily. It depends on Ca(2+) as a cofactor. As to expression, expressed by the venom gland.

The protein localises to the secreted. The catalysed reaction is a 1,2-diacyl-sn-glycero-3-phosphocholine + H2O = a 1-acyl-sn-glycero-3-phosphocholine + a fatty acid + H(+). Functionally, PLA2 catalyzes the calcium-dependent hydrolysis of the 2-acyl groups in 3-sn-phosphoglycerides. This Echis ocellatus (Ocellated saw-scaled viper) protein is Acidic phospholipase A2 5.